Here is a 275-residue protein sequence, read N- to C-terminus: MPELPEVETVRRGLETLVLGQEIVAVTLKVPKMVKTDLETFALTLPGQIIQSVGRRGKYLLIDLGQLVLVSHLRMEGKYLLFPDEVPDNKHFHVFFELKNGSTLVYQDVRKFGTFDLIAKSQLSAFFAKRKLGPEPKKETFKLKTFEAALLSSQKPIKPHLLDQTLVAGLGNIYVDEVLWAAKVHPETASSRLNKAEIKRLHDETIRILALGIEKGGSTVRTYRNALGADGTMQDYLQVYGQTGKPCPRCGQAIVKLKVGGRGTHICPKCQKKRP.

Pro-2 acts as the Schiff-base intermediate with DNA in catalysis. The active-site Proton donor is Glu-3. Residue Lys-58 is the Proton donor; for beta-elimination activity of the active site. Positions 91 and 110 each coordinate DNA. The FPG-type zinc finger occupies 238-272 (QVYGQTGKPCPRCGQAIVKLKVGGRGTHICPKCQK). Arg-262 serves as the catalytic Proton donor; for delta-elimination activity.

Belongs to the FPG family. As to quaternary structure, monomer. Zn(2+) is required as a cofactor.

The catalysed reaction is Hydrolysis of DNA containing ring-opened 7-methylguanine residues, releasing 2,6-diamino-4-hydroxy-5-(N-methyl)formamidopyrimidine.. The enzyme catalyses 2'-deoxyribonucleotide-(2'-deoxyribose 5'-phosphate)-2'-deoxyribonucleotide-DNA = a 3'-end 2'-deoxyribonucleotide-(2,3-dehydro-2,3-deoxyribose 5'-phosphate)-DNA + a 5'-end 5'-phospho-2'-deoxyribonucleoside-DNA + H(+). Its function is as follows. Involved in base excision repair of DNA damaged by oxidation or by mutagenic agents. Acts as a DNA glycosylase that recognizes and removes damaged bases. Has a preference for oxidized purines, such as 7,8-dihydro-8-oxoguanine (8-oxoG). Has AP (apurinic/apyrimidinic) lyase activity and introduces nicks in the DNA strand. Cleaves the DNA backbone by beta-delta elimination to generate a single-strand break at the site of the removed base with both 3'- and 5'-phosphates. The sequence is that of Formamidopyrimidine-DNA glycosylase from Streptococcus pyogenes serotype M18 (strain MGAS8232).